A 646-amino-acid polypeptide reads, in one-letter code: bZIP transcription factor 39 (646 aa).

At methionine 1–lysine 311 the chain is on the cytoplasmic side. The tract at residues histidine 25 to aspartate 172 is disordered. The span at leucine 43 to aspartate 53 shows a compositional bias: low complexity. Basic and acidic residues predominate over residues phenylalanine 59–serine 69. The span at glutamate 71–asparagine 98 shows a compositional bias: low complexity. Residues glutamate 103–arginine 113 are compositionally biased toward basic and acidic residues. Acidic residues predominate over residues aspartate 159–aspartate 172. The bZIP domain maps to aspartate 172–leucine 232. The interval arginine 174 to lysine 205 is basic motif. A leucine-zipper region spans residues isoleucine 211–isoleucine 218. Residues leucine 272–lysine 308 form a disordered region. Residues lysine 279–lysine 288 are compositionally biased toward low complexity. Over residues lysine 291–serine 303 the composition is skewed to basic and acidic residues. Residues valine 312 to proline 332 traverse the membrane as a helical segment. At glycine 333–asparagine 646 the chain is on the lumenal side. 6 N-linked (GlcNAc...) asparagine glycosylation sites follow: asparagine 371, asparagine 399, asparagine 525, asparagine 530, asparagine 565, and asparagine 571. Residues threonine 560–proline 585 form a disordered region. A compositionally biased stretch (polar residues) spans lysine 562–proline 585.

It belongs to the bZIP family. As to expression, highly expressed in leaf blade, and at lower levels in roots, leaf sheaths, flowers and seeds.

The protein localises to the endoplasmic reticulum membrane. Its subcellular location is the nucleus. Its function is as follows. Transcription factor involved in endoplasmic reticulum (ER) stress response. Acts as a ER stress sensor and activates the transcription factor BZIP50 and the chaperone BIP1. This chain is bZIP transcription factor 39, found in Oryza sativa subsp. japonica (Rice).